We begin with the raw amino-acid sequence, 89 residues long: Small ribosomal subunit protein uS19 (89 aa).

This sequence belongs to the universal ribosomal protein uS19 family.

In terms of biological role, protein S19 forms a complex with S13 that binds strongly to the 16S ribosomal RNA. This Xanthomonas axonopodis pv. citri (strain 306) protein is Small ribosomal subunit protein uS19.